The sequence spans 322 residues: MDPTISTLDTELTPINGTEETLCYKQTLSLTVLTCIVSLVGLTGNAVVLWLLGCRMRRNAFSIYILNLAAADFLFLSGRLIYSLLSFISIPHTISKILYPVMMFSYFAGLSFLSAVSTERCLSVLWPIWYRCHRPTHLSAVVCVLLWALSLLRSILEWMLCGFLFSGADSAWCQTSDFITVAWLIFLCVVLCGSSLVLLIRILCGSRKIPLTRLYVTILLTVLVFLLCGLPFGIQFFLFLWIHVDREVLFCHVHLVSIFLSALNSSANPIIYFFVGSFRQRQNRQNLKLVLQRALQDASEVDEGGGQLPEEILELSGSRLEQ.

At 1 to 31 (MDPTISTLDTELTPINGTEETLCYKQTLSLT) the chain is on the extracellular side. N-linked (GlcNAc...) asparagine glycosylation is present at asparagine 16. Residues 32-52 (VLTCIVSLVGLTGNAVVLWLL) traverse the membrane as a helical segment. The Cytoplasmic segment spans residues 53–67 (GCRMRRNAFSIYILN). A helical transmembrane segment spans residues 68-88 (LAAADFLFLSGRLIYSLLSFI). The Extracellular segment spans residues 89 to 96 (SIPHTISK). The chain crosses the membrane as a helical span at residues 97 to 117 (ILYPVMMFSYFAGLSFLSAVS). The Cytoplasmic segment spans residues 118 to 144 (TERCLSVLWPIWYRCHRPTHLSAVVCV). The helical transmembrane segment at 145–165 (LLWALSLLRSILEWMLCGFLF) threads the bilayer. Topologically, residues 166–177 (SGADSAWCQTSD) are extracellular. The helical transmembrane segment at 178–198 (FITVAWLIFLCVVLCGSSLVL) threads the bilayer. Residues 199-221 (LIRILCGSRKIPLTRLYVTILLT) are Cytoplasmic-facing. A helical membrane pass occupies residues 222–242 (VLVFLLCGLPFGIQFFLFLWI). Residues 243–254 (HVDREVLFCHVH) lie on the Extracellular side of the membrane. Residues 255–275 (LVSIFLSALNSSANPIIYFFV) form a helical membrane-spanning segment. The Cytoplasmic segment spans residues 276 to 322 (GSFRQRQNRQNLKLVLQRALQDASEVDEGGGQLPEEILELSGSRLEQ).

This sequence belongs to the G-protein coupled receptor 1 family. Mas subfamily. In terms of tissue distribution, uniquely localized in a subset of small dorsal root and trigeminal sensory neurons.

Its subcellular location is the cell membrane. Functionally, orphan receptor. Probably involved in the function of nociceptive neurons. May regulate nociceptor function and/or development, including the sensation or modulation of pain. Potently activated by enkephalins including BAM22 (bovine adrenal medulla peptide 22) and BAM (8-22). BAM22 is the most potent compound and evoked a large and dose-dependent release of intracellular calcium in stably transfected cells. G(alpha)q proteins are involved in the calcium-signaling pathway. Activated by the antimalarial drug, chloroquine. May mediate chloroquine-induced itch, in a histamine-independent manner. The sequence is that of Mas-related G-protein coupled receptor member X1 (MRGPRX1) from Homo sapiens (Human).